Here is a 256-residue protein sequence, read N- to C-terminus: Imidazole glycerol phosphate synthase subunit HisF (256 aa).

Active-site residues include D11 and D130.

The protein belongs to the HisA/HisF family. In terms of assembly, heterodimer of HisH and HisF.

The protein localises to the cytoplasm. The catalysed reaction is 5-[(5-phospho-1-deoxy-D-ribulos-1-ylimino)methylamino]-1-(5-phospho-beta-D-ribosyl)imidazole-4-carboxamide + L-glutamine = D-erythro-1-(imidazol-4-yl)glycerol 3-phosphate + 5-amino-1-(5-phospho-beta-D-ribosyl)imidazole-4-carboxamide + L-glutamate + H(+). It functions in the pathway amino-acid biosynthesis; L-histidine biosynthesis; L-histidine from 5-phospho-alpha-D-ribose 1-diphosphate: step 5/9. IGPS catalyzes the conversion of PRFAR and glutamine to IGP, AICAR and glutamate. The HisF subunit catalyzes the cyclization activity that produces IGP and AICAR from PRFAR using the ammonia provided by the HisH subunit. This Methylocella silvestris (strain DSM 15510 / CIP 108128 / LMG 27833 / NCIMB 13906 / BL2) protein is Imidazole glycerol phosphate synthase subunit HisF.